A 65-amino-acid chain; its full sequence is MPKMKTNSGSKKRFALTGTGKIKRKHAFHSHILTKKSKKRKRNLCYSTTVDTTNVSQVKELLAMK.

The interval 1 to 40 (MPKMKTNSGSKKRFALTGTGKIKRKHAFHSHILTKKSKKR) is disordered. The segment covering 21 to 40 (KIKRKHAFHSHILTKKSKKR) has biased composition (basic residues).

The protein belongs to the bacterial ribosomal protein bL35 family.

This is Large ribosomal subunit protein bL35 from Bacteroides fragilis (strain ATCC 25285 / DSM 2151 / CCUG 4856 / JCM 11019 / LMG 10263 / NCTC 9343 / Onslow / VPI 2553 / EN-2).